A 156-amino-acid chain; its full sequence is Small ribosomal subunit protein uS7 (156 aa).

Belongs to the universal ribosomal protein uS7 family. Part of the 30S ribosomal subunit. Contacts proteins S9 and S11.

In terms of biological role, one of the primary rRNA binding proteins, it binds directly to 16S rRNA where it nucleates assembly of the head domain of the 30S subunit. Is located at the subunit interface close to the decoding center, probably blocks exit of the E-site tRNA. The chain is Small ribosomal subunit protein uS7 from Alkaliphilus oremlandii (strain OhILAs) (Clostridium oremlandii (strain OhILAs)).